The primary structure comprises 23 residues: Paralytic peptide 2 (23 aa).

The cysteines at positions 7 and 19 are disulfide-linked.

Belongs to the GBP/PSP1/paralytic peptide family. Hemolymph.

Causes rapid, rigid paralysis when injected into Lepidopteran larvae. The physiological role may be to reduce hemolymph loss following injury and promote wound healing. The chain is Paralytic peptide 2 from Manduca sexta (Tobacco hawkmoth).